The primary structure comprises 430 residues: Agropine synthesis reductase (430 aa).

Residue 203–227 coordinates NAD(+); that stretch reads LISGPSRGIGKAIAENLIAHGYRMS. S333 provides a ligand contact to substrate. Y346 serves as the catalytic Proton acceptor.

Belongs to the short-chain dehydrogenases/reductases (SDR) family.

Its pathway is opine metabolism; mannopine biosynthesis. Its function is as follows. Reduces deoxy-fructosyl-glutamine to mannopine. The chain is Agropine synthesis reductase (mas1) from Rhizobium rhizogenes (Agrobacterium rhizogenes).